The chain runs to 493 residues: MRSNTVILAALPLVASAASTSGNWGGGVNYSKIFGGGLSANASIHYPGQPDYNTTTVQRWSTWAEPTFAVTIKPATDEDVQYIIRTANKYNLTFLATGGGHGGETGFATVKHAVNIDLSNFKENVLDLEANTLTVGPGNSFSAFETNLYNAGKMVPVGNAFCVNMIGATIGAGVGPYQGLHGLVIDALRSVRLVTASGDIVTASDEENPDLFWAVRGAGANFGIITSATYEIFDAPNNGNVVLAEFAYPGSVNGSLWQLLESWGETYPKEMGLTMSASYSQTTGTTSSSASLTYFGTQEAAQPWIDQLLALNPTQWRNATLPWSEVSQNSGFGTGASVCATGKYNNHPSVGAKQTSVSTYIEVFNQYVEIMKARPWLTSALVVQRFNTTATLAVPESKRGVYPGRDFSSLIILENYYDGPRHDADVYRFSKKLRSQLVATSGFDSLQTYINYAHGDEGPEVWYGKDNLPRLVQLKRQWDPEGKFGPGNPIPLA.

An N-terminal signal peptide occupies residues 1–17 (MRSNTVILAALPLVASA). Residues Asn-29, Asn-41, Asn-53, Asn-91, Asn-253, Asn-318, and Asn-387 are each glycosylated (N-linked (GlcNAc...) asparagine). The FAD-binding PCMH-type domain occupies 63–235 (WAEPTFAVTI…TSATYEIFDA (173 aa)).

The protein belongs to the oxygen-dependent FAD-linked oxidoreductase family.

Its pathway is secondary metabolite biosynthesis. Its function is as follows. FAD-linked oxidoreductase; part of the gene cluster that mediates the biosynthesis of azaterrilone A and other azaphilones, a class of fungal metabolites characterized by a highly oxygenated pyrano-quinone bicyclic core and exhibiting a broad range of bioactivities. The first step of the pathway begins with the non-reducing polyketide synthase tazA that assembles one acetyl-CoA starter unit, five malonyl-CoA units, and catalyzes a series of Claisen condensations, methylation, PT-mediated cyclization, and finally releases the first hexaketide precursor through the R-domain. The tazA product then undergoes reduction on its terminal ketone and the following pyran-ring formation by yet undetermined enzyme(s). Dehydration and enoyl reduction, possibly involving the trans-enoyl reductase tazE leads to the next intermediate. TazD is predicted as an acetyltransferase and might catalyze the acetylation steps leading to the synthesis of azaterrilone A. Azaterrilone A is not the final product of the taz pathway and both the highly reducing polyketide synthase tazB and the dual enzyme tazHJ catalyze late steps of the pathway, leading to the production of the 2 final stereoisomers that contain additional polyketide modification whose structures have still to be determined. The chain is FAD-linked oxidoreductase tazL from Aspergillus terreus (strain NIH 2624 / FGSC A1156).